A 979-amino-acid chain; its full sequence is Glutamate receptor ionotropic, kainate 5 (979 aa).

An N-terminal signal peptide occupies residues 1–14; sequence MPAELLLLLIVAFA. The Extracellular portion of the chain corresponds to 15–544; it reads NPSCQVLSSL…YFSFLDPFSP (530 aa). Disulfide bonds link cysteine 36/cysteine 292, cysteine 83/cysteine 334, and cysteine 165/cysteine 170. 10 N-linked (GlcNAc...) asparagine glycosylation sites follow: asparagine 219, asparagine 271, asparagine 285, asparagine 322, asparagine 372, asparagine 394, asparagine 400, asparagine 407, asparagine 414, and asparagine 478. Residues 545–565 traverse the membrane as a helical segment; the sequence is AVWLFMLLAYLAVSCVLFLAA. At 566–622 the chain is on the cytoplasmic side; the sequence is RLSPYEWYNPHPCLRARPHILENQYTLGNSLWFPVGGFMQQGSEIMPRALSTRCVSG. Residues 623-643 traverse the membrane as a helical segment; it reads VWWAFTLIIISSYTANLAAFL. The Extracellular portion of the chain corresponds to 644-803; the sequence is TVQRMEVPVE…HRAKGLGMEN (160 aa). Asparagine 735 carries N-linked (GlcNAc...) asparagine glycosylation. A helical membrane pass occupies residues 804-824; it reads IGGIFVVLICGLIIAVFVAVM. At 825 to 979 the chain is on the cytoplasmic side; the sequence is EFIWSTRRSA…TGPRELTEHE (155 aa). Over residues 856–867 the composition is skewed to basic residues; the sequence is RKTSRSRRRRRP. 3 disordered regions span residues 856-875, 890-925, and 942-979; these read RKTS…RALL, LYSA…APTP, and RASG…TEHE. A compositionally biased stretch (gly residues) spans 894 to 903; that stretch reads GAGGDAGAHG. Residues 912 to 923 show a composition bias toward pro residues; that stretch reads PGPPGGPRPQAP.

It belongs to the glutamate-gated ion channel (TC 1.A.10.1) family. GRIK5 subfamily. Homotetramer. Heterotetramer with GRIK2. Can form functional heteromeric receptors with GRIK1, GRIK2 and GRIK3. Forms a heteromeric complex with GRIK2. As to expression, expressed in the hippocampal mossy fiber synapses (at protein level).

Its subcellular location is the cell membrane. It localises to the postsynaptic cell membrane. The protein resides in the presynaptic cell membrane. In terms of biological role, ionotropic glutamate receptor that functions as a cation-permeable ligand-gated ion channel, gated by L-glutamate and the glutamatergic agonist kainic acid. Cannot form functional channels on its own and produces channel activity only in heteromeric assembly with GRIK2 subunit. Can form functional heteromeric receptors with GRIK1 and GRIK3. The polypeptide is Glutamate receptor ionotropic, kainate 5 (Grik5) (Mus musculus (Mouse)).